The chain runs to 137 residues: Large ribosomal subunit protein uL16 (137 aa).

The protein belongs to the universal ribosomal protein uL16 family. In terms of assembly, part of the 50S ribosomal subunit.

Binds 23S rRNA and is also seen to make contacts with the A and possibly P site tRNAs. This chain is Large ribosomal subunit protein uL16, found in Spiroplasma kunkelii.